We begin with the raw amino-acid sequence, 50 residues long: Insulin (50 aa).

3 disulfide bridges follow: C7-C36, C19-C49, and C35-C40.

It belongs to the insulin family. Heterodimer of a B chain and an A chain linked by two disulfide bonds.

It is found in the secreted. Insulin decreases blood glucose concentration. It increases cell permeability to monosaccharides, amino acids and fatty acids. It accelerates glycolysis, the pentose phosphate cycle, and glycogen synthesis in liver. This chain is Insulin (ins), found in Katsuwonus pelamis (Skipjack tuna).